A 111-amino-acid chain; its full sequence is MKVLVIIALCFFILQTALSEDKYESFESYVEDLKSGNMKGEARECIPLYNDCKEFKYNNNCCKDPEKKYQYKCSCIMCEGGEEQCTCQRKETVENMMKCVRFVKKVVEKVG.

A signal peptide spans 1–19; the sequence is MKVLVIIALCFFILQTALS. Residues 20-43 constitute a propeptide, removed in mature form; it reads EDKYESFESYVEDLKSGNMKGEAR. The short motif at 40–43 is the Processing quadruplet motif element; the sequence is GEAR. Cystine bridges form between Cys-45/Cys-62, Cys-52/Cys-73, Cys-61/Cys-87, Cys-75/Cys-85, and Cys-78/Cys-99. Valine amide is present on Val-110.

This sequence belongs to the neurotoxin 19 (CSTX) family. 11 (latartoxin) subfamily. In terms of processing, contains 5 disulfide bonds. Cleavage of the propeptide depends on the processing quadruplet motif (XXXR, with at least one of X being E). As to expression, expressed by the venom gland.

It is found in the secreted. In terms of biological role, insect toxin. This is Latartoxin-2b from Lachesana tarabaevi (Spider).